We begin with the raw amino-acid sequence, 360 residues long: Type II methyltransferase M.BglII (360 aa).

Residues 316 to 341 (TRQRKGSKPSLDSKAHPEEHHKKEIV) form a disordered region. The segment covering 326–341 (LDSKAHPEEHHKKEIV) has biased composition (basic and acidic residues).

It belongs to the N(4)/N(6)-methyltransferase family. N(4) subfamily.

The enzyme catalyses a 2'-deoxycytidine in DNA + S-adenosyl-L-methionine = an N(4)-methyl-2'-deoxycytidine in DNA + S-adenosyl-L-homocysteine + H(+). Functionally, a beta subtype methylase, recognizes the double-stranded sequence 5'-AGATCT-3', methylates C-5 on both strands, and protects the DNA from cleavage by the BglII endonuclease. The chain is Type II methyltransferase M.BglII from Bacillus subtilis.